Here is a 206-residue protein sequence, read N- to C-terminus: LexA repressor (206 aa).

The segment at residues 28–48 (VREIGEAVGLASSSTVHGHLD) is a DNA-binding region (H-T-H motif). Active-site for autocatalytic cleavage activity residues include Ser128 and Lys166.

It belongs to the peptidase S24 family. Homodimer.

The enzyme catalyses Hydrolysis of Ala-|-Gly bond in repressor LexA.. Its function is as follows. Represses a number of genes involved in the response to DNA damage (SOS response), including recA and lexA. In the presence of single-stranded DNA, RecA interacts with LexA causing an autocatalytic cleavage which disrupts the DNA-binding part of LexA, leading to derepression of the SOS regulon and eventually DNA repair. This Exiguobacterium sp. (strain ATCC BAA-1283 / AT1b) protein is LexA repressor.